The following is a 468-amino-acid chain: Ubiquinone biosynthesis monooxygenase COQ6, mitochondrial (468 aa).

The N-terminal 28 residues, 1-28 (MAARLVSRCGAVRAAPHSGPLVSWRRWS), are a transit peptide targeting the mitochondrion.

It belongs to the UbiH/COQ6 family. In terms of assembly, component of a multi-subunit COQ enzyme complex, composed of at least COQ3, COQ4, COQ5, COQ6, COQ7 and COQ9. Interacts with COQ8B and COQ7. The cofactor is FAD. In terms of tissue distribution, widely expressed.

The protein localises to the mitochondrion inner membrane. It localises to the golgi apparatus. The protein resides in the cell projection. The catalysed reaction is 4-hydroxy-3-(all-trans-decaprenyl)benzoate + 2 reduced [2Fe-2S]-[ferredoxin] + O2 + 2 H(+) = 3,4-dihydroxy-5-(all-trans-decaprenyl)benzoate + 2 oxidized [2Fe-2S]-[ferredoxin] + H2O. It carries out the reaction 2-methoxy-6-(all-trans-decaprenyl)phenol + 2 reduced [2Fe-2S]-[ferredoxin] + O2 + 2 H(+) = 2-methoxy-6-(all-trans-decaprenyl)benzene-1,4-diol + 2 oxidized [2Fe-2S]-[ferredoxin] + H2O. The protein operates within cofactor biosynthesis; ubiquinone biosynthesis. Functionally, FAD-dependent monooxygenase required for two non-consecutive steps during ubiquinone biosynthesis. Required for the C5-ring hydroxylation during ubiquinone biosynthesis by catalyzing the hydroxylation of 4-hydroxy-3-(all-trans-decaprenyl)benzoic acid to 3,4-dihydroxy-5-(all-trans-decaprenyl)benzoic acid. Also acts downstream of COQ4, for the C1-hydroxylation during ubiquinone biosynthesis by catalyzing the hydroxylation of 2-methoxy-6-(all-trans-decaprenyl)phenol to 2-methoxy-6-(all-trans-decaprenyl)benzene-1,4-diol. The electrons required for the hydroxylation reaction are funneled indirectly to COQ6 from NADPH via a ferredoxin/ferredoxin reductase system composed of FDX2 and FDXR. The polypeptide is Ubiquinone biosynthesis monooxygenase COQ6, mitochondrial (Homo sapiens (Human)).